A 1697-amino-acid polypeptide reads, in one-letter code: Neurexin-3a (1697 aa).

The N-terminal stretch at Met-1–Gly-23 is a signal peptide. The 175-residue stretch at Leu-24 to Cys-198 folds into the Laminin G-like 1 domain. At Leu-24–Thr-1622 the chain is on the extracellular side. The 38-residue stretch at Ile-194–Asn-231 folds into the EGF-like 1 domain. Cystine bridges form between Cys-198–Cys-209, Cys-203–Cys-218, and Cys-220–Cys-230. Laminin G-like domains lie at Val-258 to Cys-455 and Asp-462 to Cys-654. Asp-304, Leu-321, and Met-389 together coordinate Ca(2+). 5 disulfides stabilise this stretch: Cys-419-Cys-455, Cys-625-Cys-654, Cys-662-Cys-673, Cys-667-Cys-682, and Cys-684-Cys-694. Residues Ser-658–Glu-695 form the EGF-like 2 domain. Laminin G-like domains are found at residues Ile-700–Cys-872 and Asp-886–Cys-1061. 4 disulfide bridges follow: Cys-1033–Cys-1061, Cys-1077–Cys-1088, Cys-1082–Cys-1097, and Cys-1099–Cys-1109. Positions Pro-1073–Asn-1110 constitute an EGF-like 3 domain. The Laminin G-like 6 domain occupies Thr-1114 to Val-1314. Disordered regions lie at residues Thr-1345–Met-1366, Leu-1442–Pro-1479, and Pro-1520–His-1557. The span at Gly-1446–Gly-1461 shows a compositional bias: acidic residues. Residues Gly-1527–Pro-1547 are compositionally biased toward polar residues. Residues Gly-1623–Met-1643 traverse the membrane as a helical segment. The Cytoplasmic portion of the chain corresponds to Tyr-1644–Val-1697. The segment at Asn-1665–Val-1697 is disordered.

The protein belongs to the neurexin family.

The protein resides in the membrane. In terms of biological role, neuronal cell surface protein that may be involved in cell recognition and cell adhesion. In Danio rerio (Zebrafish), this protein is Neurexin-3a (nrxn3a).